Consider the following 473-residue polypeptide: Kynurenine 3-monooxygenase (473 aa).

It belongs to the aromatic-ring hydroxylase family. KMO subfamily. FAD serves as cofactor.

Its subcellular location is the mitochondrion outer membrane. It catalyses the reaction L-kynurenine + NADPH + O2 + H(+) = 3-hydroxy-L-kynurenine + NADP(+) + H2O. The protein operates within cofactor biosynthesis; NAD(+) biosynthesis; quinolinate from L-kynurenine: step 1/3. Catalyzes the hydroxylation of L-kynurenine (L-Kyn) to form 3-hydroxy-L-kynurenine (L-3OHKyn). Required for synthesis of quinolinic acid. The polypeptide is Kynurenine 3-monooxygenase (Debaryomyces hansenii (strain ATCC 36239 / CBS 767 / BCRC 21394 / JCM 1990 / NBRC 0083 / IGC 2968) (Yeast)).